The chain runs to 1716 residues: DNA-directed RNA polymerase I subunit RPA1 (1716 aa).

Zn(2+)-binding residues include Cys-64, Cys-67, Cys-74, His-77, Cys-104, and Cys-107. Residues 110-201 (LTCPRAAIHL…VAHFWKTHMA (92 aa)) are clamp. Zn(2+) contacts are provided by Cys-205 and Cys-208. The segment at 327–433 (FTNGQTVNLQ…IRQILEKKEG (107 aa)) is clamp. The segment at 410 to 423 (DSDMDKLMLEKYPG) is rudder. DNA is bound by residues Lys-431, Arg-436, and Arg-443. The involved in RRN3 binding to Pol I complex stretch occupies residues 475–549 (YPQPVTPWNV…QGAKVVCRHV (75 aa)). Arg-559 lines the RNA pocket. Asp-595, Asp-597, and Asp-599 together coordinate Mg(2+). Asp-599 contributes to the RNA binding site. Residues 812 to 890 (KPNADVMRQR…NEINKACMPF (79 aa)) are funnel. The bridging helix stretch occupies residues 967 to 1008 (RPPEFFFHCMAGREGLVDTAVKTSRSGYLQRCIIKHLEGLVI). The mediates the interaction with TOP2A stretch occupies residues 1067–1162 (ADPQKVLRHF…SLSVWRPDIH (96 aa)). Positions 1214-1255 (PGEAVGLLAAQSIGEPSTQMTLNTFHFAGRGEMNVTLGIPRL) are trigger loop. A DNA-binding site is contributed by Arg-1256. The tract at residues 1368–1493 (ASAFRSVNTR…RHSRPQGAEA (126 aa)) is disordered. Basic and acidic residues predominate over residues 1380 to 1397 (TQKDLDDTEDSGRNRREE). 2 stretches are compositionally biased toward acidic residues: residues 1398 to 1419 (ERDE…DADA) and 1429 to 1451 (EEEV…VQEE). Basic and acidic residues predominate over residues 1452–1464 (ENIKGEGAHQTHE). Acidic residues predominate over residues 1465–1477 (PDEEEGSGLEEES).

It belongs to the RNA polymerase beta' chain family. In terms of assembly, component of the RNA polymerase I (Pol I) complex consisting of 13 subunits: a ten-subunit catalytic core composed of POLR1A/RPA1, POLR1B/RPA2, POLR1C/RPAC1, POLR1D/RPAC2, POLR1H/RPA12, POLR2E/RPABC1, POLR2F/RPABC2, POLR2H/RPABC3, POLR2K/RPABC4 and POLR2L/RPABC5; a mobile stalk subunit POLR1F/RPA43 protruding from the core and additional subunits homologous to general transcription factors POLR1E/RPA49 and POLR1G/RPA34. Part of Pol I pre-initiation complex (PIC), in which Pol I core assembles with RRN3 and promoter-bound UTBF and SL1/TIF-IB complex. Interacts (via dock II domain) with TOP2A; this interaction may assist Pol I transcription initiation by releasing supercoils occurring during DNA unwinding. Interacts with CAVIN1; this interaction induces the dissociation of Pol I complex paused at rDNA terminator sequences. Interacts with MYO1C. Interacts with ERBB2. Interacts with DDX11. Interacts with RECQL5. Mg(2+) serves as cofactor. Phosphorylated.

The protein localises to the nucleus. It localises to the nucleolus. Its subcellular location is the chromosome. It catalyses the reaction RNA(n) + a ribonucleoside 5'-triphosphate = RNA(n+1) + diphosphate. Functionally, catalytic core component of RNA polymerase I (Pol I), a DNA-dependent RNA polymerase which synthesizes ribosomal RNA precursors using the four ribonucleoside triphosphates as substrates. Transcribes 47S pre-rRNAs from multicopy rRNA gene clusters, giving rise to 5.8S, 18S and 28S ribosomal RNAs. Pol I-mediated transcription cycle proceeds through transcription initiation, transcription elongation and transcription termination stages. During transcription initiation, Pol I pre-initiation complex (PIC) is recruited by the selectivity factor 1 (SL1/TIF-IB) complex bound to the core promoter that precedes an rDNA repeat unit. The PIC assembly bends the promoter favoring the formation of the transcription bubble and promoter escape. Once the polymerase has escaped from the promoter it enters the elongation phase during which RNA is actively polymerized, based on complementarity with the template DNA strand. Highly processive, assembles in structures referred to as 'Miller trees' where many elongating Pol I complexes queue and transcribe the same rDNA coding regions. At terminator sequences downstream of the rDNA gene, PTRF interacts with Pol I and halts Pol I transcription leading to the release of the RNA transcript and polymerase from the DNA. Forms Pol I active center together with the second largest subunit POLR1B/RPA2. Appends one nucleotide at a time to the 3' end of the nascent RNA, with POLR1A/RPA1 contributing a Mg(2+)-coordinating DxDGD motif, and POLR1B/RPA2 participating in the coordination of a second Mg(2+) ion and providing lysine residues believed to facilitate Watson-Crick base pairing between the incoming nucleotide and the template base. Typically, Mg(2+) ions direct a 5' nucleoside triphosphate to form a phosphodiester bond with the 3' hydroxyl of the preceding nucleotide of the nascent RNA, with the elimination of pyrophosphate. Has proofreading activity: Pauses and backtracks to allow the cleavage of a missincorporated nucleotide via POLR1H/RPA12. High Pol I processivity is associated with decreased transcription fidelity. The protein is DNA-directed RNA polymerase I subunit RPA1 of Rattus norvegicus (Rat).